Reading from the N-terminus, the 375-residue chain is uncharacterized protein (375 aa).

The protein belongs to the mimivirus L17x/L18x family.

This is an uncharacterized protein from Acanthamoeba polyphaga mimivirus (APMV).